The following is a 119-amino-acid chain: Ribonuclease P protein component (119 aa).

Belongs to the RnpA family. As to quaternary structure, consists of a catalytic RNA component (M1 or rnpB) and a protein subunit.

It catalyses the reaction Endonucleolytic cleavage of RNA, removing 5'-extranucleotides from tRNA precursor.. RNaseP catalyzes the removal of the 5'-leader sequence from pre-tRNA to produce the mature 5'-terminus. It can also cleave other RNA substrates such as 4.5S RNA. The protein component plays an auxiliary but essential role in vivo by binding to the 5'-leader sequence and broadening the substrate specificity of the ribozyme. The polypeptide is Ribonuclease P protein component (Photorhabdus laumondii subsp. laumondii (strain DSM 15139 / CIP 105565 / TT01) (Photorhabdus luminescens subsp. laumondii)).